A 172-amino-acid chain; its full sequence is C-phycocyanin-2 beta subunit (172 aa).

At N72 the chain carries N4-methylasparagine. (2R,3E)-phycocyanobilin-binding residues include C82 and C153.

Belongs to the phycobiliprotein family. In terms of assembly, heterodimer of an alpha and a beta subunit, which further assembles into trimers and the trimers into hexamers. In terms of processing, contains two covalently linked bilin chromophores.

The protein resides in the cellular thylakoid membrane. In terms of biological role, light-harvesting photosynthetic bile pigment-protein from the phycobiliprotein complex (phycobilisome, PBS). Phycocyanin is the major phycobiliprotein in the PBS rod. In Pseudanabaena tenuis (strain PCC 7409), this protein is C-phycocyanin-2 beta subunit (cpcB2).